A 65-amino-acid polypeptide reads, in one-letter code: Large ribosomal subunit protein bL35 (65 aa).

The protein belongs to the bacterial ribosomal protein bL35 family.

The sequence is that of Large ribosomal subunit protein bL35 from Magnetococcus marinus (strain ATCC BAA-1437 / JCM 17883 / MC-1).